We begin with the raw amino-acid sequence, 264 residues long: Osteopontin (264 aa).

Positions 1–16 are cleaved as a signal peptide; the sequence is MKLAFLCLCFISIAAA. Disordered stretches follow at residues 21–141 and 166–264; these read KSRQ…RGDS and IEDD…EVTR. Over residues 31 to 51 the composition is skewed to basic and acidic residues; it reads SEEKYDPRSHHTHRYHQDHVD. Residues 52–73 are compositionally biased toward polar residues; the sequence is SQSQEHLQQTQNDLASLQQTHY. Over residues 97–118 the composition is skewed to acidic residues; it reads AVDDDDDDDNDSNDTDESDEVV. 2 N-linked (GlcNAc...) asparagine glycosylation sites follow: asparagine 106 and asparagine 109. Residues 132–134 carry the Cell attachment site motif; sequence RGD. The span at 186 to 212 shows a compositional bias: basic and acidic residues; sequence KESREQDSRELAQHQSVENDSRPRFDS. Residues asparagine 204 and asparagine 242 are each glycosylated (N-linked (GlcNAc...) asparagine). Residues 233-246 show a composition bias toward polar residues; it reads ASRSAVDTSNQTLE. The segment covering 252 to 264 has biased composition (basic and acidic residues); that stretch reads EDRHSIENNEVTR.

The protein belongs to the osteopontin family. Post-translationally, extensively phosphorylated on serine residues.

It is found in the secreted. Major non-collagenous bone protein that binds tightly to hydroxyapatite. Appears to form an integral part of the mineralized matrix. Probably important to cell-matrix interaction. Functionally, acts as a cytokine involved in enhancing production of interferon-gamma and interleukin-12 and reducing production of interleukin-10 and is essential in the pathway that leads to type I immunity. This chain is Osteopontin (SPP1), found in Gallus gallus (Chicken).